Here is a 90-residue protein sequence, read N- to C-terminus: UPF0297 protein BH1268 (90 aa).

Belongs to the UPF0297 family.

The sequence is that of UPF0297 protein BH1268 from Halalkalibacterium halodurans (strain ATCC BAA-125 / DSM 18197 / FERM 7344 / JCM 9153 / C-125) (Bacillus halodurans).